A 962-amino-acid chain; its full sequence is Splicing regulator ARVCF (962 aa).

The stretch at 8–46 (SAASILASVKEQEARFERLTRALEQERRHVALQLERAQQ) forms a coiled coil. The disordered stretch occupies residues 95 to 122 (TVEEDPGTPTSHVSIVTSEDGTTRRTET). Thr102 and Thr104 each carry phosphothreonine. Polar residues predominate over residues 102-114 (TPTSHVSIVTSED). An Omega-N-methylarginine modification is found at Arg170. 2 disordered regions span residues 186–253 (GGGF…LPER) and 266–290 (RSLA…RRRP). A compositionally biased stretch (low complexity) spans 206–217 (RGLGMRPPRAGP). A Phosphoserine modification is found at Ser267. Acidic residues predominate over residues 270-280 (ADDEGGPELEP). Phosphoserine is present on residues Ser332, Ser335, Ser343, and Ser345. ARM repeat units lie at residues 348–387 (SARK…HLCF), 390–429 (EGVK…NLSY), 433–467 (TDNK…VTGT), 468–508 (LWNL…NEDS), 526–565 (LRNV…DTDN), and 575–622 (MRNL…GKKA). Residues 590–614 (DRYQEAEPGPLGSAVGSQRRRRDDA) form a disordered region. Phosphoserine is present on Ser606. The Nuclear localization signal signature appears at 607–623 (QRRRRDDASCFGGKKAK). Thr642 carries the phosphothreonine modification. 4 ARM repeats span residues 646-686 (PKRT…AAGA), 699-738 (TYIR…NLSL), 739-781 (DRRN…AVLN), and 782-826 (TIHE…SHVL). The interval 776-962 (VVAVLNTIHE…AKPQPVDSWV (187 aa)) is required for interaction with RNA-binding proteins DDX5, HNRNPH2 and SRSF1 and with mRNAs. Residues 854-962 (ATAKGPKGAL…AKPQPVDSWV (109 aa)) form a disordered region. Phosphoserine is present on residues Ser864 and Ser871. Thr872 carries the phosphothreonine modification. Residues 878–887 (KSLEGEKTGS) show a composition bias toward basic and acidic residues. Ser915 bears the Phosphoserine mark. The span at 920–932 (ASEKEPLKLDPSR) shows a compositional bias: basic and acidic residues.

The protein belongs to the beta-catenin family. Component of a ribonucleoprotein complex containing mRNAs and RNA-binding proteins including DDX5, HNRNPH2 and SRSF1 as well as ARVCF. Interacts (via the extreme C-terminus) with FRMPD2 (via the PDZ 2 domain). Interacts with CCDC85B. As to expression, found in all the examined tissues including heart, brain, liver and kidney. Found at low level in lung. Expressed in dermal connective tissue, salivary gland duct and in the corneal layer (at protein level). Expressed in arrector pili muscle (at protein level). High levels detected in epithelial cells with lower levels found in fibroblasts and T lymphocytes.

It localises to the cell junction. The protein resides in the adherens junction. The protein localises to the nucleus. Its subcellular location is the cytoplasm. Contributes to the regulation of alternative splicing of pre-mRNAs. The chain is Splicing regulator ARVCF from Homo sapiens (Human).